Here is a 171-residue protein sequence, read N- to C-terminus: Calcium-binding allergen Ole e 8 (171 aa).

EF-hand domains lie at 16-51, 52-87, 92-127, and 128-163; these read QEPN…LGSN, TSKE…ETDP, GGEN…LGER, and YAEH…KSGN. Residues aspartate 29, asparagine 31, aspartate 33, lysine 35, glutamate 40, aspartate 65, aspartate 67, aspartate 69, glutamate 76, aspartate 105, aspartate 107, asparagine 109, glutamate 116, aspartate 141, aspartate 143, aspartate 145, tyrosine 147, and glutamate 152 each coordinate Ca(2+).

Homodimer. In terms of tissue distribution, expressed in pollen.

The polypeptide is Calcium-binding allergen Ole e 8 (Olea europaea (Common olive)).